A 329-amino-acid chain; its full sequence is Carrier protein YMC2, mitochondrial (329 aa).

The segment at 1–27 (MSEEFPTPQLLDELEDQQKVTTPNEKR) is disordered. The transit peptide at 1 to 33 (MSEEFPTPQLLDELEDQQKVTTPNEKRELSSNR) directs the protein to the mitochondrion. 3 Solcar repeats span residues 34–115 (VLKD…MKRF), 143–226 (SQYY…LVAR), and 238–325 (PPWK…VMRF). The next 6 membrane-spanning stretches (helical) occupy residues 38–58 (IFAG…FDTT), 84–104 (VFAF…CVSV), 140–160 (LPLS…SFLA), 205–225 (TMIR…ALVA), 243–263 (CLFG…LDVV), and 297–318 (FFKG…TFLT).

Belongs to the mitochondrial carrier (TC 2.A.29) family.

The protein resides in the mitochondrion inner membrane. The chain is Carrier protein YMC2, mitochondrial (YMC2) from Saccharomyces cerevisiae (strain ATCC 204508 / S288c) (Baker's yeast).